The sequence spans 195 residues: Protein GrpE (195 aa).

Residues 1–18 show a composition bias toward basic and acidic residues; sequence MDPKEKKTKQEEELKVDD. Residues 1-41 form a disordered region; it reads MDPKEKKTKQEEELKVDDIQDTVEGQSQNEEATEATEPLTA.

Belongs to the GrpE family. Homodimer.

Its subcellular location is the cytoplasm. In terms of biological role, participates actively in the response to hyperosmotic and heat shock by preventing the aggregation of stress-denatured proteins, in association with DnaK and GrpE. It is the nucleotide exchange factor for DnaK and may function as a thermosensor. Unfolded proteins bind initially to DnaJ; upon interaction with the DnaJ-bound protein, DnaK hydrolyzes its bound ATP, resulting in the formation of a stable complex. GrpE releases ADP from DnaK; ATP binding to DnaK triggers the release of the substrate protein, thus completing the reaction cycle. Several rounds of ATP-dependent interactions between DnaJ, DnaK and GrpE are required for fully efficient folding. The polypeptide is Protein GrpE (Bacteroides fragilis (strain ATCC 25285 / DSM 2151 / CCUG 4856 / JCM 11019 / LMG 10263 / NCTC 9343 / Onslow / VPI 2553 / EN-2)).